Reading from the N-terminus, the 733-residue chain is tRNA (guanine(27)-N(2))-dimethyltransferase (733 aa).

The span at 1-18 (MENMAEEELLPLEKEEVE) shows a compositional bias: acidic residues. The disordered stretch occupies residues 1–78 (MENMAEEELL…LASAPEEAKS (78 aa)). Thr-26 carries the phosphothreonine modification. 2 stretches are compositionally biased toward low complexity: residues 39-49 (PDSALDSAPTP) and 57-73 (PALA…ASAP). Ser-66 bears the Phosphoserine mark. Positions 135–139 (HKLRR) match the Nucleolar localization signal motif. The segment at 184–206 (YHCIICSATITRRTDMLGHVRRH) adopts a C2H2-type zinc-finger fold. The Trm1 methyltransferase domain maps to 227–688 (EILKEADTDV…APLMQFKSIL (462 aa)). S-adenosyl-L-methionine-binding residues include Arg-260, Asp-307, Asp-357, and Ala-358. Zn(2+) contacts are provided by Cys-488, Cys-491, Cys-513, and Cys-515. Residue Lys-585 forms a Glycyl lysine isopeptide (Lys-Gly) (interchain with G-Cter in SUMO2) linkage. Phosphoserine occurs at positions 612 and 707.

This sequence belongs to the class I-like SAM-binding methyltransferase superfamily. Trm1 family. In terms of tissue distribution, widely expressed.

Its subcellular location is the nucleus. The protein localises to the nucleolus. The catalysed reaction is guanosine(27) in tRNA(Tyr) + 2 S-adenosyl-L-methionine = N(2)-dimethylguanosine(27) in tRNA(Tyr) + 2 S-adenosyl-L-homocysteine + 2 H(+). Functionally, specifically dimethylates a single guanine residue at position 27 of tRNA(Tyr) using S-adenosyl-L-methionine as donor of the methyl groups. Dimethylation at position 27 of tRNA(Tyr) is required for efficient translation of tyrosine codons. Also required to maintain 3-(3-amino-3-carboxypropyl)uridine (acp3U) in the D-loop of several cytoplasmic tRNAs. The polypeptide is tRNA (guanine(27)-N(2))-dimethyltransferase (Homo sapiens (Human)).